Reading from the N-terminus, the 200-residue chain is NADH-quinone oxidoreductase subunit I 1 (200 aa).

4Fe-4S ferredoxin-type domains are found at residues 52–82 (LNRH…VEGA) and 98–127 (RVYQ…MTNE). [4Fe-4S] cluster-binding residues include cysteine 62, cysteine 65, cysteine 68, cysteine 72, cysteine 107, cysteine 110, cysteine 113, and cysteine 117. Residues 181-200 (TERQVAVSKGEKPQDEGVEA) are disordered. A compositionally biased stretch (basic and acidic residues) spans 189–200 (KGEKPQDEGVEA).

Belongs to the complex I 23 kDa subunit family. As to quaternary structure, NDH-1 is composed of 14 different subunits. Subunits NuoA, H, J, K, L, M, N constitute the membrane sector of the complex. [4Fe-4S] cluster serves as cofactor.

The protein resides in the cell membrane. It carries out the reaction a quinone + NADH + 5 H(+)(in) = a quinol + NAD(+) + 4 H(+)(out). Its function is as follows. NDH-1 shuttles electrons from NADH, via FMN and iron-sulfur (Fe-S) centers, to quinones in the respiratory chain. The immediate electron acceptor for the enzyme in this species is believed to be ubiquinone. Couples the redox reaction to proton translocation (for every two electrons transferred, four hydrogen ions are translocated across the cytoplasmic membrane), and thus conserves the redox energy in a proton gradient. The protein is NADH-quinone oxidoreductase subunit I 1 of Streptomyces avermitilis (strain ATCC 31267 / DSM 46492 / JCM 5070 / NBRC 14893 / NCIMB 12804 / NRRL 8165 / MA-4680).